Here is a 402-residue protein sequence, read N- to C-terminus: RNA-binding protein 42 (402 aa).

Residues 240–275 form a disordered region; it reads ETASDDSVIGPSMPEPEPVHVEPVDTSTEDKKKGKQ. Over residues 256-275 the composition is skewed to basic and acidic residues; it reads EPVHVEPVDTSTEDKKKGKQ. Positions 303 to 381 constitute an RRM domain; that stretch reads FRIFCGDLGN…RPIKLRKSAW (79 aa).

Belongs to the RRM RBM42 family.

It is found in the nucleus. The protein localises to the cytoplasm. May bind RNA. This Danio rerio (Zebrafish) protein is RNA-binding protein 42 (rbm42).